The sequence spans 239 residues: Cysteine-rich venom protein 2 (239 aa).

Positions 1–19 are cleaved as a signal peptide; that stretch reads MIALIVLPILAAVLQQSSG. The 129-residue stretch at 38 to 166 folds into the SCP domain; it reads VDLHNSLRRS…EYSYFYVCQY (129 aa). Disulfide bonds link C75-C153, C92-C167, C148-C164, C186-C193, C189-C198, C202-C234, and C219-C232. The 37-residue stretch at 198-234 folds into the ShKT domain; it reads CTNPCPKKISTQLPRFGPQAGCQDKQMQSDCSATCFC.

It belongs to the CRISP family. As to expression, expressed by the venom gland.

Its subcellular location is the secreted. Weakly blocks contraction of smooth muscle elicited by high potassium-induced depolarization, but does not block caffeine-stimulated contraction. May target voltage-gated calcium channels on smooth muscle. This chain is Cysteine-rich venom protein 2, found in Sistrurus catenatus edwardsii (Desert massasauga).